Reading from the N-terminus, the 295-residue chain is Inositol polyphosphate multikinase IPK2 (295 aa).

Residues 1 to 21 (MASDLRPPEHQVAGHRASADK) are disordered.

It belongs to the inositol phosphokinase (IPK) family.

It carries out the reaction 1D-myo-inositol 1,4,5-trisphosphate + 2 ATP = 1D-myo-inositol 1,3,4,5,6-pentakisphosphate + 2 ADP + 2 H(+). The catalysed reaction is 1D-myo-inositol 1,3,4,6-tetrakisphosphate + ATP = 1D-myo-inositol 1,3,4,5,6-pentakisphosphate + ADP + H(+). Its function is as follows. Inositol phosphate kinase with a broad substrate specificity. Phosphorylates inositol 1,4,5-trisphosphate (Ins(1,4,5)P3), inositol 1,4,5,6-tetrakisphosphate (Ins(1,4,5,6)P4), inositol 1,3,4,5-tetrakisphosphate (Ins(1,3,4,5)P4), inositol 1,3,4,6-tetrakisphosphate (Ins(1,3,4,6)P4) and inositol 1,2,3,4,6-pentakisphosphate (Ins(1,2,3,4,6)P5) but not inositol 1,4-bisphosphate (Ins(1,4)P2), inositol 1,3,4-trisphosphate (Ins(1,3,4)P3), inositol 1,2,6-trisphosphate (Ins(1,2,6)P3), inositol 3,4,5,6-tetrakisphosphate (Ins(3,4,5,6)P4), inositol 1,3,4,5,6-pentakisphosphate (Ins(1,3,4,5,6)P5), inositol 1,2,4,5,6-pentakisphosphate (Ins(1,2,4,5,6)P5) or inositol hexakisphosphate (InsP6). Regulates pollen and root development probably through the regulation of InsP3-mediated calcium accumulation. The protein is Inositol polyphosphate multikinase IPK2 of Oryza sativa subsp. indica (Rice).